A 340-amino-acid chain; its full sequence is Ferrochelatase (340 aa).

Fe cation is bound by residues H218 and E298.

The protein belongs to the ferrochelatase family.

It is found in the cytoplasm. The catalysed reaction is heme b + 2 H(+) = protoporphyrin IX + Fe(2+). The protein operates within porphyrin-containing compound metabolism; protoheme biosynthesis; protoheme from protoporphyrin-IX: step 1/1. In terms of biological role, catalyzes the ferrous insertion into protoporphyrin IX. This chain is Ferrochelatase, found in Wolbachia sp. subsp. Brugia malayi (strain TRS).